The chain runs to 1073 residues: Carbamoyl phosphate synthase large chain (1073 aa).

The tract at residues 2–403 (PKRTDIKSIL…SLQKALRGLE (402 aa)) is carboxyphosphate synthetic domain. Positions 129, 169, 175, 176, 208, 210, 215, 241, 242, 243, 285, and 299 each coordinate ATP. An ATP-grasp 1 domain is found at 133-328 (DVAMKKIGLE…IAKVAAKLAV (196 aa)). Mg(2+) is bound by residues glutamine 285, glutamate 299, and asparagine 301. Glutamine 285, glutamate 299, and asparagine 301 together coordinate Mn(2+). The tract at residues 404–553 (VGATGFDPKV…YSTYEEECEA (150 aa)) is oligomerization domain. The interval 554 to 936 (NPSTDREKIM…AFAKAQLGSN (383 aa)) is carbamoyl phosphate synthetic domain. In terms of domain architecture, ATP-grasp 2 spans 679–870 (QHAVERLKLK…LAKVAARVMA (192 aa)). ATP is bound by residues arginine 715, histidine 754, leucine 756, glutamate 761, glycine 786, valine 787, histidine 788, serine 789, glutamine 829, and glutamate 841. Mg(2+)-binding residues include glutamine 829, glutamate 841, and asparagine 843. Glutamine 829, glutamate 841, and asparagine 843 together coordinate Mn(2+). One can recognise an MGS-like domain in the interval 937 to 1073 (STMKKHGRAL…SVQEMHAQIK (137 aa)). Residues 937-1073 (STMKKHGRAL…SVQEMHAQIK (137 aa)) are allosteric domain.

The protein belongs to the CarB family. In terms of assembly, composed of two chains; the small (or glutamine) chain promotes the hydrolysis of glutamine to ammonia, which is used by the large (or ammonia) chain to synthesize carbamoyl phosphate. Tetramer of heterodimers (alpha,beta)4. The cofactor is Mg(2+). Mn(2+) is required as a cofactor.

It catalyses the reaction hydrogencarbonate + L-glutamine + 2 ATP + H2O = carbamoyl phosphate + L-glutamate + 2 ADP + phosphate + 2 H(+). The catalysed reaction is hydrogencarbonate + NH4(+) + 2 ATP = carbamoyl phosphate + 2 ADP + phosphate + 2 H(+). It functions in the pathway amino-acid biosynthesis; L-arginine biosynthesis; carbamoyl phosphate from bicarbonate: step 1/1. The protein operates within pyrimidine metabolism; UMP biosynthesis via de novo pathway; (S)-dihydroorotate from bicarbonate: step 1/3. Large subunit of the glutamine-dependent carbamoyl phosphate synthetase (CPSase). CPSase catalyzes the formation of carbamoyl phosphate from the ammonia moiety of glutamine, carbonate, and phosphate donated by ATP, constituting the first step of 2 biosynthetic pathways, one leading to arginine and/or urea and the other to pyrimidine nucleotides. The large subunit (synthetase) binds the substrates ammonia (free or transferred from glutamine from the small subunit), hydrogencarbonate and ATP and carries out an ATP-coupled ligase reaction, activating hydrogencarbonate by forming carboxy phosphate which reacts with ammonia to form carbamoyl phosphate. This Escherichia coli (strain K12) protein is Carbamoyl phosphate synthase large chain.